The primary structure comprises 822 residues: ATP-dependent zinc metalloprotease FTSH 8, mitochondrial (822 aa).

Low complexity predominate over residues 1 to 25; it reads MSLASLARALSRRSAPSSSRARQGF. Disordered stretches follow at residues 1–50, 103–131, and 202–221; these read MSLA…LHGG, NYYPKGKKEAPKGDGSNKSDSKQDSSTDD, and SSPQSNSQGQNTDAIITTND. Residues 1–93 constitute a mitochondrion transit peptide; sequence MSLASLARAL…LANPQFRRLF (93 aa). The segment covering 108–127 has biased composition (basic and acidic residues); sequence GKKEAPKGDGSNKSDSKQDS. Residue 375–382 coordinates ATP; it reads GPPGTGKT. A Zn(2+)-binding site is contributed by His-600. Glu-601 is an active-site residue. Zn(2+) is bound by residues His-604 and Asp-676. The interval 781-822 is disordered; the sequence is PTNYDLFKQGFQDEEDSKNQEAAKTPQPDDDGTPSLGEVVPT.

In the N-terminal section; belongs to the AAA ATPase family. This sequence in the C-terminal section; belongs to the peptidase M41 family. Requires Zn(2+) as cofactor.

Its subcellular location is the mitochondrion. In terms of biological role, probable ATP-dependent zinc metallopeptidase. This chain is ATP-dependent zinc metalloprotease FTSH 8, mitochondrial (FTSH8), found in Oryza sativa subsp. japonica (Rice).